The primary structure comprises 496 residues: 6-phosphogluconate dehydrogenase, decarboxylating (496 aa).

NADP(+)-binding positions include 13 to 18 (GLDVSI), 24 to 26 (DNV), 68 to 70 (ITH), and asparagine 96. Residues asparagine 96 and 122-124 (SGG) contribute to the substrate site. Lysine 178 acts as the Proton acceptor in catalysis. Position 181–182 (181–182 (HN)) interacts with substrate. Glutamate 185 (proton donor) is an active-site residue. Residues arginine 300 and histidine 468 each coordinate substrate. The segment at 476 to 496 (PGEDPGPVSKGPHHYEWRPAK) is disordered.

Belongs to the 6-phosphogluconate dehydrogenase family. In terms of assembly, homodimer.

The protein resides in the cytoplasm. It catalyses the reaction 6-phospho-D-gluconate + NADP(+) = D-ribulose 5-phosphate + CO2 + NADPH. It functions in the pathway carbohydrate degradation; pentose phosphate pathway; D-ribulose 5-phosphate from D-glucose 6-phosphate (oxidative stage): step 3/3. Functionally, catalyzes the oxidative decarboxylation of 6-phosphogluconate to ribulose 5-phosphate and CO(2), with concomitant reduction of NADP to NADPH. The protein is 6-phosphogluconate dehydrogenase, decarboxylating of Emericella nidulans (strain FGSC A4 / ATCC 38163 / CBS 112.46 / NRRL 194 / M139) (Aspergillus nidulans).